A 472-amino-acid polypeptide reads, in one-letter code: 3-isopropylmalate dehydratase large subunit (472 aa).

Residues C353, C414, and C417 each contribute to the [4Fe-4S] cluster site.

Belongs to the aconitase/IPM isomerase family. LeuC type 1 subfamily. Heterodimer of LeuC and LeuD. [4Fe-4S] cluster is required as a cofactor.

It carries out the reaction (2R,3S)-3-isopropylmalate = (2S)-2-isopropylmalate. It participates in amino-acid biosynthesis; L-leucine biosynthesis; L-leucine from 3-methyl-2-oxobutanoate: step 2/4. Its function is as follows. Catalyzes the isomerization between 2-isopropylmalate and 3-isopropylmalate, via the formation of 2-isopropylmaleate. The chain is 3-isopropylmalate dehydratase large subunit from Acinetobacter baumannii (strain ATCC 17978 / DSM 105126 / CIP 53.77 / LMG 1025 / NCDC KC755 / 5377).